We begin with the raw amino-acid sequence, 192 residues long: UPF0312 protein plu2095 (192 aa).

The N-terminal stretch at 1–23 is a signal peptide; sequence MLKKTLLGLTAGALLLNASSALA.

The protein belongs to the UPF0312 family. Type 1 subfamily.

The protein localises to the periplasm. This Photorhabdus laumondii subsp. laumondii (strain DSM 15139 / CIP 105565 / TT01) (Photorhabdus luminescens subsp. laumondii) protein is UPF0312 protein plu2095.